The following is a 419-amino-acid chain: Phosphatidylcholine:ceramide cholinephosphotransferase 1 (419 aa).

Residues 13-76 enclose the SAM domain; it reads WSPKKVADWL…LDMIETLKME (64 aa). S14 carries the post-translational modification Phosphoserine. A run of 5 helical transmembrane segments spans residues 142–162, 190–210, 221–241, 282–302, and 310–330; these read FLAF…ISVV, FSIC…QWLL, FFCI…VTTL, MCGD…YLFI, and LWWY…CILL. H291 is a catalytic residue. Topologically, residues 331-419 are cytoplasmic; that stretch reads AHDHYTVDVV…VKYSRLVNDT (89 aa). Active-site residues include H334 and D338.

It belongs to the sphingomyelin synthase family. As to expression, isoform 1 is widely expressed, isoform 2 shows a more narrow distribution and isoform 3 is detected only in testis and heart.

The protein resides in the golgi apparatus membrane. It carries out the reaction an N-acylsphing-4-enine + a 1,2-diacyl-sn-glycero-3-phosphocholine = a sphingomyelin + a 1,2-diacyl-sn-glycerol. The catalysed reaction is 1-(9Z-octadecenoyl)-2-acyl-sn-3-glycerol + a sphingomyelin = a 1-(9Z-octadecenoyl)-2-acyl-sn-glycero-3-phosphocholine + an N-acylsphing-4-enine. It catalyses the reaction N-hexadecanoylsphinganine + a 1,2-diacyl-sn-glycero-3-phosphocholine = N-hexadecanoyl-sphinganine-1-phosphocholine + a 1,2-diacyl-sn-glycerol. The enzyme catalyses N-hexadecanoyl-(4R)-hydroxysphinganine + a 1,2-diacyl-sn-glycero-3-phosphocholine = N-hexadecanoyl-(4R)-hydroxysphinganine-phosphocholine + a 1,2-diacyl-sn-glycerol. It carries out the reaction an N-acylsphing-4-enine + a 1,2-diacyl-sn-glycero-3-phosphoethanolamine = an N-acylsphing-4-enine 1-phosphoethanolamine + a 1,2-diacyl-sn-glycerol. Its pathway is sphingolipid metabolism. Its function is as follows. Major sphingomyelin synthase at the Golgi apparatus. Catalyzes the reversible transfer of phosphocholine moiety in sphingomyelin biosynthesis: in the forward reaction transfers phosphocholine head group of phosphatidylcholine (PC) on to ceramide (CER) to form ceramide phosphocholine (sphingomyelin, SM) and diacylglycerol (DAG) as by-product, and in the reverse reaction transfers phosphocholine from SM to DAG to form PC and CER. The direction of the reaction depends on the levels of CER and DAG in Golgi membranes. Converts the newly synthesized CER, that is transported from the endoplasmic reticulum to the trans-Golgi by the Cer transport protein (CERT), to SM. Can form a heteromeric complex with glucosylceramide synthase (GCS) increasing SMS activity and reducing glucosylceramide synthesis, a critical mechanism that controls the metabolic fate of CER in the Golgi. Does not use free phosphorylcholine or CDP-choline as donor. Can also transfer phosphoethanolamine head group of phosphatidylethanolamine (PE) on to CER to form ceramide phosphoethanolamine (CPE). Regulates receptor-mediated signal transduction via mitogenic DAG and proapoptotic CER, as well as via SM, a structural component of membrane rafts that serve as platforms for signal transduction and protein sorting. Plays a role in secretory transport via regulation of DAG pool at the Golgi apparatus and its downstream effects on PRKD1. (Microbial infection) Contributes to the brain SM production for Japanese encephalitis virus attachment and infection. In Mus musculus (Mouse), this protein is Phosphatidylcholine:ceramide cholinephosphotransferase 1 (Sgms1).